The chain runs to 300 residues: ADP-polyphosphate phosphotransferase 1 (300 aa).

This sequence belongs to the polyphosphate kinase 2 (PPK2) family. Class I subfamily. As to quaternary structure, homotetramer. It depends on Mg(2+) as a cofactor.

The enzyme catalyses [phosphate](n) + ATP = [phosphate](n+1) + ADP. The catalysed reaction is [phosphate](n) + GTP = [phosphate](n+1) + GDP. In terms of biological role, uses inorganic polyphosphate (polyP) as a donor to convert ADP to ATP. Can also convert GDP to GTP, with lower efficiency. Cannot dephosphorylate ATP in the presence of polyP. The protein is ADP-polyphosphate phosphotransferase 1 of Rhizobium meliloti (strain 1021) (Ensifer meliloti).